A 143-amino-acid polypeptide reads, in one-letter code: Large-conductance mechanosensitive channel (143 aa).

The next 3 membrane-spanning stretches (helical) occupy residues 10–30 (FAIK…GAFG), 40–60 (IIMP…QKFI), and 86–106 (GNFL…FLMV).

It belongs to the MscL family. Homopentamer.

The protein resides in the cell inner membrane. Functionally, channel that opens in response to stretch forces in the membrane lipid bilayer. May participate in the regulation of osmotic pressure changes within the cell. The polypeptide is Large-conductance mechanosensitive channel (Acinetobacter baumannii (strain ATCC 17978 / DSM 105126 / CIP 53.77 / LMG 1025 / NCDC KC755 / 5377)).